The following is a 134-amino-acid chain: UPF0715 membrane protein YoaG (134 aa).

4 consecutive transmembrane segments (helical) span residues 9–29, 35–55, 72–92, and 106–126; these read LMTLGLSSLTFGLLLGFYSFV, IIALFTAAIALLYGFVVYGLF, VMYLLIYSVVAFIAAFLFFVI, and FYYMLSIAAAVIYWLWDSLIL.

It belongs to the UPF0715 family.

Its subcellular location is the cell membrane. The protein is UPF0715 membrane protein YoaG (yoaG) of Bacillus subtilis (strain 168).